Consider the following 104-residue polypeptide: Large ribosomal subunit protein uL24 (104 aa).

Belongs to the universal ribosomal protein uL24 family. In terms of assembly, part of the 50S ribosomal subunit.

Functionally, one of two assembly initiator proteins, it binds directly to the 5'-end of the 23S rRNA, where it nucleates assembly of the 50S subunit. One of the proteins that surrounds the polypeptide exit tunnel on the outside of the subunit. This chain is Large ribosomal subunit protein uL24, found in Hydrogenovibrio crunogenus (strain DSM 25203 / XCL-2) (Thiomicrospira crunogena).